A 383-amino-acid chain; its full sequence is S-adenosylmethionine synthase (383 aa).

ATP is bound at residue H15. D17 contributes to the Mg(2+) binding site. Residue E43 coordinates K(+). Residues E56 and Q99 each coordinate L-methionine. The flexible loop stretch occupies residues 99–109; that stretch reads QSPDINQGVDR. Residues 164-166, 230-231, D239, 245-246, A262, and K266 contribute to the ATP site; these read DAK, RF, and RK. D239 is an L-methionine binding site. K270 lines the L-methionine pocket.

It belongs to the AdoMet synthase family. In terms of assembly, homotetramer; dimer of dimers. Requires Mg(2+) as cofactor. K(+) is required as a cofactor.

The protein localises to the cytoplasm. The catalysed reaction is L-methionine + ATP + H2O = S-adenosyl-L-methionine + phosphate + diphosphate. It functions in the pathway amino-acid biosynthesis; S-adenosyl-L-methionine biosynthesis; S-adenosyl-L-methionine from L-methionine: step 1/1. Functionally, catalyzes the formation of S-adenosylmethionine (AdoMet) from methionine and ATP. The overall synthetic reaction is composed of two sequential steps, AdoMet formation and the subsequent tripolyphosphate hydrolysis which occurs prior to release of AdoMet from the enzyme. This chain is S-adenosylmethionine synthase, found in Shewanella sp. (strain W3-18-1).